A 117-amino-acid polypeptide reads, in one-letter code: Putative pterin-4-alpha-carbinolamine dehydratase (117 aa).

It belongs to the pterin-4-alpha-carbinolamine dehydratase family.

It catalyses the reaction (4aS,6R)-4a-hydroxy-L-erythro-5,6,7,8-tetrahydrobiopterin = (6R)-L-erythro-6,7-dihydrobiopterin + H2O. This is Putative pterin-4-alpha-carbinolamine dehydratase from Aeromonas salmonicida (strain A449).